The following is a 205-amino-acid chain: Octanoyltransferase (205 aa).

Positions 29–204 constitute a BPL/LPL catalytic domain; it reads AETPDEIWIV…HLLQQLDQKN (176 aa). Residues 68 to 75, 135 to 137, and 148 to 150 each bind substrate; these read RGGQVTYH, ALG, and GVS. Cys-166 functions as the Acyl-thioester intermediate in the catalytic mechanism.

The protein belongs to the LipB family.

Its subcellular location is the cytoplasm. It carries out the reaction octanoyl-[ACP] + L-lysyl-[protein] = N(6)-octanoyl-L-lysyl-[protein] + holo-[ACP] + H(+). Its pathway is protein modification; protein lipoylation via endogenous pathway; protein N(6)-(lipoyl)lysine from octanoyl-[acyl-carrier-protein]: step 1/2. In terms of biological role, catalyzes the transfer of endogenously produced octanoic acid from octanoyl-acyl-carrier-protein onto the lipoyl domains of lipoate-dependent enzymes. Lipoyl-ACP can also act as a substrate although octanoyl-ACP is likely to be the physiological substrate. In Dechloromonas aromatica (strain RCB), this protein is Octanoyltransferase.